Consider the following 1227-residue polypeptide: DNA-directed RNA polymerase subunit beta (1227 aa).

Belongs to the RNA polymerase beta chain family. The RNAP catalytic core consists of 2 alpha, 1 beta, 1 beta' and 1 omega subunit. When a sigma factor is associated with the core the holoenzyme is formed, which can initiate transcription.

It catalyses the reaction RNA(n) + a ribonucleoside 5'-triphosphate = RNA(n+1) + diphosphate. Functionally, DNA-dependent RNA polymerase catalyzes the transcription of DNA into RNA using the four ribonucleoside triphosphates as substrates. The polypeptide is DNA-directed RNA polymerase subunit beta (Chloroflexus aurantiacus (strain ATCC 29366 / DSM 635 / J-10-fl)).